The following is a 154-amino-acid chain: 6,7-dimethyl-8-ribityllumazine synthase (154 aa).

5-amino-6-(D-ribitylamino)uracil contacts are provided by residues F23, 57-59 (AFE), and 81-83 (AVI). 86–87 (ST) provides a ligand contact to (2S)-2-hydroxy-3-oxobutyl phosphate. Catalysis depends on H89, which acts as the Proton donor. Position 114 (F114) interacts with 5-amino-6-(D-ribitylamino)uracil. Position 128 (R128) interacts with (2S)-2-hydroxy-3-oxobutyl phosphate.

Belongs to the DMRL synthase family.

It catalyses the reaction (2S)-2-hydroxy-3-oxobutyl phosphate + 5-amino-6-(D-ribitylamino)uracil = 6,7-dimethyl-8-(1-D-ribityl)lumazine + phosphate + 2 H2O + H(+). Its pathway is cofactor biosynthesis; riboflavin biosynthesis; riboflavin from 2-hydroxy-3-oxobutyl phosphate and 5-amino-6-(D-ribitylamino)uracil: step 1/2. Its function is as follows. Catalyzes the formation of 6,7-dimethyl-8-ribityllumazine by condensation of 5-amino-6-(D-ribitylamino)uracil with 3,4-dihydroxy-2-butanone 4-phosphate. This is the penultimate step in the biosynthesis of riboflavin. The polypeptide is 6,7-dimethyl-8-ribityllumazine synthase (Syntrophotalea carbinolica (strain DSM 2380 / NBRC 103641 / GraBd1) (Pelobacter carbinolicus)).